The following is a 126-amino-acid chain: Glycine cleavage system H protein (126 aa).

One can recognise a Lipoyl-binding domain in the interval 23-104 (TLTVGITDHA…PYESWLFKIK (82 aa)). Position 64 is an N6-lipoyllysine (Lys64).

The protein belongs to the GcvH family. The glycine cleavage system is composed of four proteins: P, T, L and H. (R)-lipoate serves as cofactor.

Its function is as follows. The glycine cleavage system catalyzes the degradation of glycine. The H protein shuttles the methylamine group of glycine from the P protein to the T protein. This Paraburkholderia xenovorans (strain LB400) protein is Glycine cleavage system H protein.